The chain runs to 432 residues: Serine hydroxymethyltransferase (432 aa).

Residues Leu127 and 131 to 133 (GHL) each bind (6S)-5,6,7,8-tetrahydrofolate. Lys236 bears the N6-(pyridoxal phosphate)lysine mark.

Belongs to the SHMT family. As to quaternary structure, homodimer. Requires pyridoxal 5'-phosphate as cofactor.

Its subcellular location is the cytoplasm. The catalysed reaction is (6R)-5,10-methylene-5,6,7,8-tetrahydrofolate + glycine + H2O = (6S)-5,6,7,8-tetrahydrofolate + L-serine. It participates in one-carbon metabolism; tetrahydrofolate interconversion. The protein operates within amino-acid biosynthesis; glycine biosynthesis; glycine from L-serine: step 1/1. Its function is as follows. Catalyzes the reversible interconversion of serine and glycine with tetrahydrofolate (THF) serving as the one-carbon carrier. This reaction serves as the major source of one-carbon groups required for the biosynthesis of purines, thymidylate, methionine, and other important biomolecules. Also exhibits THF-independent aldolase activity toward beta-hydroxyamino acids, producing glycine and aldehydes, via a retro-aldol mechanism. The chain is Serine hydroxymethyltransferase from Rhizobium rhizogenes (strain K84 / ATCC BAA-868) (Agrobacterium radiobacter).